Reading from the N-terminus, the 291-residue chain is tRNA N(3)-cytidine methyltransferase METTL8, mitochondrial (291 aa).

The N-terminal 21 residues, Met1–Tyr21, are a transit peptide targeting the mitochondrion. Lys80 participates in a covalent cross-link: Glycyl lysine isopeptide (Lys-Gly) (interchain with G-Cter in SUMO). S-adenosyl-L-methionine-binding residues include Trp89 and Tyr93. The tract at residues Phe141–Glu187 is disordered. Residues Ser159–Lys168 are compositionally biased toward low complexity. Positions 204, 230, and 256 each coordinate S-adenosyl-L-methionine.

This sequence belongs to the methyltransferase superfamily. METL family. In terms of assembly, interacts with EP300.

It is found in the mitochondrion. The enzyme catalyses cytidine(32) in tRNA(Ser) + S-adenosyl-L-methionine = N(3)-methylcytidine(32) in tRNA(Ser) + S-adenosyl-L-homocysteine + H(+). It carries out the reaction cytidine(32) in tRNA(Thr) + S-adenosyl-L-methionine = N(3)-methylcytidine(32) in tRNA(Thr) + S-adenosyl-L-homocysteine + H(+). The catalysed reaction is a cytidine in mRNA + S-adenosyl-L-methionine = an N(3)-methylcytidine in mRNA + S-adenosyl-L-homocysteine + H(+). Its function is as follows. Mitochondrial S-adenosyl-L-methionine-dependent methyltransferase that mediates N(3)-methylcytidine modification of residue 32 of the tRNA anticodon loop of mitochondrial tRNA(Ser)(UCN) and tRNA(Thr). N(3)-methylcytidine methylation modification regulates mitochondrial translation efficiency and is required for activity of the respiratory chain. N(3)-methylcytidine methylation of mitochondrial tRNA(Ser)(UCN) requires the formation of N(6)-dimethylallyladenosine(37) (i6A37) by TRIT1 as prerequisite. May also mediate N(3)-methylcytidine modification of mRNAs. The existence of N(3)-methylcytidine modification on mRNAs is however unclear, and additional evidences are required to confirm the role of the N(3)-methylcytidine-specific mRNA methyltransferase activity of METTL8 in vivo. The sequence is that of tRNA N(3)-cytidine methyltransferase METTL8, mitochondrial from Homo sapiens (Human).